A 347-amino-acid polypeptide reads, in one-letter code: Oocyte-specific homeobox protein 6 (347 aa).

Disordered regions lie at residues 1–20 and 54–86; these read MLQYNQSPHMPQDPSLHSKF and PRSPMQSSHSVPERDLCPQESQGPSGKSSIQMQ. The segment covering 72–85 has biased composition (polar residues); the sequence is QESQGPSGKSSIQM. Residues 145–204 constitute a DNA-binding region (homeobox); it reads HRKIRTVYTEEQKCVLKKHFHKCTYPSREQRMALAVLVGVTANEIQIWFKNHRAKSKRES.

Belongs to the paired homeobox family. Obox subfamily. Specifically expressed in early embryos.

It localises to the nucleus. In terms of biological role, transcription factor required for zygotic genome activation (ZGA), a critical event in early embryonic development during which the developmental control passes from maternally provided mRNAs to the expression of the zygotic genome after fertilization. This chain is Oocyte-specific homeobox protein 6, found in Mus musculus (Mouse).